A 311-amino-acid polypeptide reads, in one-letter code: Bifunctional protein FolD (311 aa).

Residues 184-186, Ile-209, and Ile-250 each bind NADP(+); that span reads GAS.

Belongs to the tetrahydrofolate dehydrogenase/cyclohydrolase family. As to quaternary structure, homodimer.

It carries out the reaction (6R)-5,10-methylene-5,6,7,8-tetrahydrofolate + NADP(+) = (6R)-5,10-methenyltetrahydrofolate + NADPH. The catalysed reaction is (6R)-5,10-methenyltetrahydrofolate + H2O = (6R)-10-formyltetrahydrofolate + H(+). The protein operates within one-carbon metabolism; tetrahydrofolate interconversion. In terms of biological role, catalyzes the oxidation of 5,10-methylenetetrahydrofolate to 5,10-methenyltetrahydrofolate and then the hydrolysis of 5,10-methenyltetrahydrofolate to 10-formyltetrahydrofolate. The chain is Bifunctional protein FolD from Gluconacetobacter diazotrophicus (strain ATCC 49037 / DSM 5601 / CCUG 37298 / CIP 103539 / LMG 7603 / PAl5).